A 298-amino-acid chain; its full sequence is Glyoxalase domain-containing protein 4 (298 aa).

The 126-residue stretch at 5–130 (RALHFVFKVK…GGYKFYLQDR (126 aa)) folds into the VOC 1 domain. Position 109 is an N6-succinyllysine (Lys109). Ser131 carries the post-translational modification Phosphoserine. Positions 137–258 (PVLKVTLAVS…DGHEICFVGD (122 aa)) constitute a VOC 2 domain. N6-succinyllysine is present on Lys273.

This sequence belongs to the glyoxalase I family. As to quaternary structure, interacts with NUDT9.

The protein resides in the mitochondrion. This chain is Glyoxalase domain-containing protein 4 (Glod4), found in Mus musculus (Mouse).